The sequence spans 132 residues: MKTVKVNIVTPDGPVYDADIEMVSVRAESGDLGILPGHIPTVAPLKIGAVRLKKDGQTEMVAVSGGFVEVRPDHVTILAQAAETAEGIDKERAEAARQRAQERLNSQSDDTDIRRAELALQRALNRLDVAGK.

A compositionally biased stretch (basic and acidic residues) spans 88 to 102; that stretch reads IDKERAEAARQRAQE. Residues 88-112 form a disordered region; that stretch reads IDKERAEAARQRAQERLNSQSDDTD.

This sequence belongs to the ATPase epsilon chain family. F-type ATPases have 2 components, CF(1) - the catalytic core - and CF(0) - the membrane proton channel. CF(1) has five subunits: alpha(3), beta(3), gamma(1), delta(1), epsilon(1). CF(0) has three main subunits: a, b and c. The F(1)F(0) complex interacts with SpoIIIJ and YqjG; YqgA is found in the same complex.

It localises to the cell membrane. Produces ATP from ADP in the presence of a proton gradient across the membrane. In Bacillus subtilis (strain 168), this protein is ATP synthase epsilon chain (atpC).